The primary structure comprises 104 residues: Integration host factor subunit beta (104 aa).

It belongs to the bacterial histone-like protein family. As to quaternary structure, heterodimer of an alpha and a beta chain.

In terms of biological role, this protein is one of the two subunits of integration host factor, a specific DNA-binding protein that functions in genetic recombination as well as in transcriptional and translational control. The sequence is that of Integration host factor subunit beta from Xylella fastidiosa (strain M23).